A 398-amino-acid chain; its full sequence is Flavin-containing monooxygenase ustF1 (398 aa).

Positions 1–22 are cleaved as a signal peptide; the sequence is MTVSQVRRVAVIGAGISGVVST. 13–18 contributes to the FAD binding site; it reads GAGISG. Asn53, Asn57, Asn119, and Asn126 each carry an N-linked (GlcNAc...) asparagine glycan. Residue 194–199 participates in NADP(+) binding; that stretch reads GGGVSS. 3 N-linked (GlcNAc...) asparagine glycosylation sites follow: Asn236, Asn243, and Asn271.

It belongs to the FMO family.

Its pathway is mycotoxin biosynthesis. Functionally, flavin-containing monooxygenase; part of the gene cluster that mediates the biosynthesis of the secondary metabolite ustiloxin B, an antimitotic tetrapeptide. First, ustA is processed by the subtilisin-like endoprotease Kex2 that is outside the ustiloxin B gene cluster, at the C-terminal side of Arg-Lys, after transfer to Golgi apparatus through the endoplasmic reticulum (ER). Cleavage by KEX2 generates 16 peptides YAIG-I to YAIG-XVI. To process the precursor peptide further, at least two peptidases are necessary to cleave the N-terminal and C-terminal sides of the Tyr-Ala-Ile-Gly core peptide which serves as backbone for the synthesis of ustiloxin B, through cyclization and modification of the tyrosine with a non-protein coding amino acid, norvaline. One of the two peptidases must be the serine peptidase ustP; and the other pepdidase is probably ustH. Macrocyclization of the core peptide derived from ustA requires the tyrosinase ustQ, as well as the homologous oxidases ustYa and ustYb, and leads to the production of the first cyclization product N-desmethylustiloxin F. For the formation of N-desmethylustiloxin F, three oxidation steps are required, hydroxylation at the benzylic position, hydroxylation at either the aromatic ring of Tyr or beta-position of Ile, and oxidative cyclization. UstQ may catalyze the oxidation of a phenol moiety, whereas the ustYa and ustYb are most likely responsible for the remaining two-step oxidations. N-desmethylustiloxin F is then methylated by ustM to yield ustiloxin F which in turn substrate of the cytochrome P450 monooxygenase ustC which catalyzes the formation of S-deoxyustiloxin H. The flavoprotein monooxygenases ustF1 and ustF2 then participate in the modification of the side chain of S-deoxyustiloxin H, leading to the synthesis of an oxime intermediate, via ustiloxin H. Finally, carboxylative dehydration performed by the cysteine desulfurase-like protein ustD yields ustiloxin B. The sequence is that of Flavin-containing monooxygenase ustF1 from Aspergillus flavus (strain ATCC 200026 / FGSC A1120 / IAM 13836 / NRRL 3357 / JCM 12722 / SRRC 167).